The sequence spans 494 residues: Endoglucanase 1 (494 aa).

The signal sequence occupies residues 1 to 25; the sequence is MDCSSPLSLFHLLLVCTVMVKCCSA. D82 serves as the catalytic Nucleophile. Residues N254 and N359 are each glycosylated (N-linked (GlcNAc...) asparagine). Catalysis depends on residues H411, D462, and E471.

It belongs to the glycosyl hydrolase 9 (cellulase E) family.

The enzyme catalyses Endohydrolysis of (1-&gt;4)-beta-D-glucosidic linkages in cellulose, lichenin and cereal beta-D-glucans.. Involved in ripening fruit process. The chain is Endoglucanase 1 (CEL1) from Persea americana (Avocado).